Consider the following 256-residue polypeptide: uncharacterized protein (256 aa).

This sequence belongs to the methyltransferase superfamily.

It localises to the cytoplasm. The protein resides in the nucleus. In terms of biological role, probable methyltransferase. This is an uncharacterized protein from Schizosaccharomyces pombe (strain 972 / ATCC 24843) (Fission yeast).